We begin with the raw amino-acid sequence, 370 residues long: MKFIDEARIEVIAGDGGDGSASMRREKFVPFGGPDGGDGGRGGSVYAIADRNINTLIDYRYAKKHLARNGENGRGSDCYGKGGDDVTLRMPVGTIISDMDTGELIADLTEHDQRVMLAQGGAGGLGNLHFKSSTNRAPRQKTDGKPGERRMLKLELKVLADVGLLGMPNAGKSTFISSVSNAKPKIADYPFTTLAPNLGVVRVGPSKSFVIADIPGLIEGAAEGAGLGHQFLRHLQRTGVLLHLVDLAPFDESVDPVAEATAIVGELRKYDEALYEKPRWLVLNKLDMVPEDEREARVADFLDRFGWDGPVFEISALTGQGCEALCYAIYDYLSEHSDAHRAAEAEDLAADVRFRDAPPAKGGATPGDDA.

An Obg domain is found at 1–159 (MKFIDEARIE…RMLKLELKVL (159 aa)). A disordered region spans residues 128 to 147 (LHFKSSTNRAPRQKTDGKPG). One can recognise an OBG-type G domain in the interval 160-334 (ADVGLLGMPN…LCYAIYDYLS (175 aa)). GTP-binding positions include 166-173 (GMPNAGKS), 191-195 (FTTLA), 213-216 (DIPG), 284-287 (NKLD), and 315-317 (SAL). Residues S173 and T193 each contribute to the Mg(2+) site.

Belongs to the TRAFAC class OBG-HflX-like GTPase superfamily. OBG GTPase family. As to quaternary structure, monomer. Mg(2+) is required as a cofactor.

The protein localises to the cytoplasm. In terms of biological role, an essential GTPase which binds GTP, GDP and possibly (p)ppGpp with moderate affinity, with high nucleotide exchange rates and a fairly low GTP hydrolysis rate. Plays a role in control of the cell cycle, stress response, ribosome biogenesis and in those bacteria that undergo differentiation, in morphogenesis control. The protein is GTPase Obg of Burkholderia cenocepacia (strain ATCC BAA-245 / DSM 16553 / LMG 16656 / NCTC 13227 / J2315 / CF5610) (Burkholderia cepacia (strain J2315)).